The following is a 212-amino-acid chain: Disintegrin-like halysetin (212 aa).

The Disintegrin domain maps to 4–90 (PPVCGNELLE…ECPADVFHKN (87 aa)). 9 cysteine pairs are disulfide-bonded: Cys-7/Cys-26, Cys-18/Cys-36, Cys-62/Cys-82, Cys-69/Cys-94, Cys-101/Cys-106, Cys-113/Cys-128, Cys-151/Cys-158, Cys-163/Cys-174, and Cys-200/Cys-205. A D/ECD-tripeptide motif is present at residues 68-70 (ECD).

This sequence belongs to the venom metalloproteinase (M12B) family. P-III subfamily. P-IIIb sub-subfamily. In terms of assembly, monomer. Expressed by the venom gland.

The protein resides in the secreted. In terms of biological role, inhibits human platelet aggregation stimulated by collagen with an IC(50) of 420 nM. In Gloydius halys (Chinese water mocassin), this protein is Disintegrin-like halysetin.